Consider the following 176-residue polypeptide: Translation initiation factor IF-3 (176 aa).

It belongs to the IF-3 family. In terms of assembly, monomer.

Its subcellular location is the cytoplasm. Functionally, IF-3 binds to the 30S ribosomal subunit and shifts the equilibrium between 70S ribosomes and their 50S and 30S subunits in favor of the free subunits, thus enhancing the availability of 30S subunits on which protein synthesis initiation begins. This Nitratidesulfovibrio vulgaris (strain DSM 19637 / Miyazaki F) (Desulfovibrio vulgaris) protein is Translation initiation factor IF-3.